The sequence spans 256 residues: Thiazole synthase (256 aa).

The Schiff-base intermediate with DXP role is filled by Lys95. 1-deoxy-D-xylulose 5-phosphate contacts are provided by residues Gly156, 182–183, and 204–205; these read AG and NT.

The protein belongs to the ThiG family. As to quaternary structure, homotetramer. Forms heterodimers with either ThiH or ThiS.

It is found in the cytoplasm. It catalyses the reaction [ThiS sulfur-carrier protein]-C-terminal-Gly-aminoethanethioate + 2-iminoacetate + 1-deoxy-D-xylulose 5-phosphate = [ThiS sulfur-carrier protein]-C-terminal Gly-Gly + 2-[(2R,5Z)-2-carboxy-4-methylthiazol-5(2H)-ylidene]ethyl phosphate + 2 H2O + H(+). The protein operates within cofactor biosynthesis; thiamine diphosphate biosynthesis. In terms of biological role, catalyzes the rearrangement of 1-deoxy-D-xylulose 5-phosphate (DXP) to produce the thiazole phosphate moiety of thiamine. Sulfur is provided by the thiocarboxylate moiety of the carrier protein ThiS. In vitro, sulfur can be provided by H(2)S. In Escherichia coli O8 (strain IAI1), this protein is Thiazole synthase.